We begin with the raw amino-acid sequence, 725 residues long: Catalase-peroxidase (725 aa).

Residues 99 to 227 (WHAAGTYRIA…LAAVMMGLIY (129 aa)) constitute a cross-link (tryptophyl-tyrosyl-methioninium (Trp-Tyr) (with M-253)). His100 serves as the catalytic Proton acceptor. The segment at residues 227–253 (YVNPEGVDGNPDPLKTAHDIRITFSRM) is a cross-link (tryptophyl-tyrosyl-methioninium (Tyr-Met) (with W-99)). His268 contributes to the heme b binding site.

Belongs to the peroxidase family. Peroxidase/catalase subfamily. In terms of assembly, homodimer or homotetramer. Heme b is required as a cofactor. Formation of the three residue Trp-Tyr-Met cross-link is important for the catalase, but not the peroxidase activity of the enzyme.

The catalysed reaction is H2O2 + AH2 = A + 2 H2O. It catalyses the reaction 2 H2O2 = O2 + 2 H2O. Its function is as follows. Bifunctional enzyme with both catalase and broad-spectrum peroxidase activity. In Picosynechococcus sp. (strain ATCC 27264 / PCC 7002 / PR-6) (Agmenellum quadruplicatum), this protein is Catalase-peroxidase.